Reading from the N-terminus, the 233-residue chain is ATP synthase subunit a 2 (233 aa).

5 helical membrane-spanning segments follow: residues 15–35 (FVVI…LVIG), 78–98 (YLAF…LTVV), 107–127 (SLST…IYGI), 169–189 (IMSG…FVPV), and 194–214 (LGLV…LVYI).

This sequence belongs to the ATPase A chain family. As to quaternary structure, F-type ATPases have 2 components, CF(1) - the catalytic core - and CF(0) - the membrane proton channel. CF(1) has five subunits: alpha(3), beta(3), gamma(1), delta(1), epsilon(1). CF(0) has four main subunits: a, b, b' and c.

The protein localises to the cellular thylakoid membrane. Key component of the proton channel; it plays a direct role in the translocation of protons across the membrane. In Picosynechococcus sp. (strain ATCC 27264 / PCC 7002 / PR-6) (Agmenellum quadruplicatum), this protein is ATP synthase subunit a 2.